Consider the following 632-residue polypeptide: tRNA uridine 5-carboxymethylaminomethyl modification enzyme MnmG (632 aa).

FAD contacts are provided by residues 16–21 (GAGHAG), Val128, and Ser183. The tract at residues 206 to 225 (PRVNGNTIDYSKTEEEPGDK) is disordered. Positions 216–225 (SKTEEEPGDK) are enriched in basic and acidic residues. Position 277-291 (277-291 (GPRYCPSIEDKVVRF)) interacts with NAD(+). Gln374 contacts FAD.

The protein belongs to the MnmG family. In terms of assembly, homodimer. Heterotetramer of two MnmE and two MnmG subunits. Requires FAD as cofactor.

It localises to the cytoplasm. NAD-binding protein involved in the addition of a carboxymethylaminomethyl (cmnm) group at the wobble position (U34) of certain tRNAs, forming tRNA-cmnm(5)s(2)U34. This chain is tRNA uridine 5-carboxymethylaminomethyl modification enzyme MnmG, found in Lactobacillus acidophilus (strain ATCC 700396 / NCK56 / N2 / NCFM).